A 623-amino-acid chain; its full sequence is V-type proton ATPase catalytic subunit A (623 aa).

252–259 (GAFGCGKT) is a binding site for ATP.

It belongs to the ATPase alpha/beta chains family. In terms of assembly, V-ATPase is a heteromultimeric enzyme composed of a peripheral catalytic V1 complex (main components: subunits A, B, C, D, E, and F) attached to an integral membrane V0 proton pore complex (main component: the proteolipid protein).

The catalysed reaction is ATP + H2O + 4 H(+)(in) = ADP + phosphate + 5 H(+)(out). Catalytic subunit of the peripheral V1 complex of vacuolar ATPase. V-ATPase vacuolar ATPase is responsible for acidifying a variety of intracellular compartments in eukaryotic cells. In Brassica napus (Rape), this protein is V-type proton ATPase catalytic subunit A.